The chain runs to 168 residues: Small ribosomal subunit protein uS7c (168 aa).

Belongs to the universal ribosomal protein uS7 family. Part of the 30S ribosomal subunit.

The protein resides in the plastid. It localises to the chloroplast. One of the primary rRNA binding proteins, it binds directly to 16S rRNA where it nucleates assembly of the head domain of the 30S subunit. The protein is Small ribosomal subunit protein uS7c (rps7) of Chlamydomonas reinhardtii (Chlamydomonas smithii).